An 842-amino-acid chain; its full sequence is ATP-binding cassette sub-family B member 6 (842 aa).

The Lumenal portion of the chain corresponds to 1–26 (MVTVGNYCETEGPAGPAWTQNGLSPC). Residues 1 to 205 (MVTVGNYCET…SGGLFILGLW (205 aa)) are required for the lysosomal targeting. The tract at residues 1 to 236 (MVTVGNYCET…GNQGRSTDRR (236 aa)) is required for ATPase activity. Cysteine 8 and cysteine 26 are disulfide-bonded. Residues 27–47 (FFFTLVPSTLLTLGVLALVLV) traverse the membrane as a helical segment. The Cytoplasmic segment spans residues 48-72 (LPRRRREVPAGPEELSWAAGPRVAP). Residues 73 to 93 (YVLQLFLATLQMALPLAGLAG) form a helical membrane-spanning segment. Residues 94–106 (RVGTARGVRLPGY) lie on the Lumenal side of the membrane. The helical transmembrane segment at 107-127 (LLLASVLESLASVCGLWLLVV) threads the bilayer. Over 128 to 147 (ERSQARQSLAMGVWMKFRHS) the chain is Cytoplasmic. The chain crosses the membrane as a helical span at residues 148–168 (LGLLLLWTVTFAAENLALVSW). Residues 169–185 (NSPQWWWARADLGQQVQ) lie on the Lumenal side of the membrane. Residues 186-206 (FGLWVLRYVTSGGLFILGLWA) form a helical membrane-spanning segment. Topologically, residues 207 to 263 (PGLRPQSYTLHVHEEDQDVGGNQGRSTDRRSTWRDLGRKLRLLSSYLWPRGSPSLQL) are cytoplasmic. A helical membrane pass occupies residues 264-284 (IVLICLGLMGLERALNVLVPI). The region spanning 265–556 (VLICLGLMGL…FGTYYRMIQT (292 aa)) is the ABC transmembrane type-1 domain. Over 285 to 291 (FYRDIVN) the chain is Lumenal. A helical membrane pass occupies residues 292–312 (LLTAKAPWSSLAWTVTTYVFL). Residues 313–375 (KFLQGGGTGS…TGEVLRIVDR (63 aa)) lie on the Cytoplasmic side of the membrane. The helical transmembrane segment at 376–396 (GTSSVTGLLSYLVFSIIPTLA) threads the bilayer. Residue aspartate 397 is a topological domain, lumenal. The helical transmembrane segment at 398–418 (IIIGIIYFSMFFNAWFGLIVF) threads the bilayer. Over 419-499 (LCMSLYLILT…STASLVVLNQ (81 aa)) the chain is Cytoplasmic. A helical transmembrane segment spans residues 500 to 520 (TQNLVIGLGLLAGSLLCAYFV). Residues 521-529 (SEQKLQVGD) are Lumenal-facing. A helical membrane pass occupies residues 530–550 (FVLFGTYITQLYMPLNWFGTY). Residues 551–842 (YRMIQTNFID…PEESKPQDTA (292 aa)) lie on the Cytoplasmic side of the membrane. An ABC transporter domain is found at 590–824 (IEFENVHFSY…GGVYAEMWQL (235 aa)). Residues tyrosine 599 and 623 to 634 (GPSGAGKSTILR) each bind ATP.

Belongs to the ABC transporter superfamily. ABCB family. Heavy Metal importer (TC 3.A.1.210) subfamily. Homodimer. N-glycosylated.

The protein resides in the cell membrane. The protein localises to the mitochondrion outer membrane. Its subcellular location is the endoplasmic reticulum membrane. It localises to the golgi apparatus membrane. It is found in the endosome membrane. The protein resides in the lysosome membrane. The protein localises to the late endosome membrane. Its subcellular location is the early endosome membrane. It localises to the secreted. It is found in the extracellular exosome. The protein resides in the mitochondrion. The protein localises to the endosome. Its subcellular location is the multivesicular body membrane. It localises to the melanosome membrane. It carries out the reaction coproporphyrin III(in) + ATP + H2O = coproporphyrin III(out) + ADP + phosphate + H(+). The enzyme catalyses coproporphyrinogen III(in) + ATP + H2O = coproporphyrinogen III(out) + ADP + phosphate + H(+). It catalyses the reaction heme b(in) + ATP + H2O = heme b(out) + ADP + phosphate + H(+). The catalysed reaction is pheophorbide a(in) + ATP + H2O = pheophorbide a(out) + ADP + phosphate + H(+). It carries out the reaction protoporphyrin IX(in) + ATP + H2O = protoporphyrin IX(out) + ADP + phosphate + H(+). The enzyme catalyses coproporphyrin I(in) + ATP + H2O = coproporphyrin I(out) + ADP + phosphate + H(+). It catalyses the reaction uroporphyrin I(in) + ATP + H2O = uroporphyrin I(out) + ADP + phosphate + H(+). The catalysed reaction is uroporphyrin III(in) + ATP + H2O = uroporphyrin III(out) + ADP + phosphate + H(+). Its function is as follows. ATP-dependent transporter that catalyzes the transport of a broad-spectrum of porphyrins from the cytoplasm to the extracellular space through the plasma membrane or into the vesicle lumen. May also function as an ATP-dependent importer of porphyrins from the cytoplasm into the mitochondria, in turn may participate in the de novo heme biosynthesis regulation and in the coordination of heme and iron homeostasis during phenylhydrazine stress. May play a key role in the early steps of melanogenesis producing PMEL amyloid fibrils. In vitro, it confers to cells a resistance to toxic metal such as arsenic and cadmium and against chemotherapeutics agent such as 5-fluorouracil, SN-38 and vincristin. In addition may play a role in the transition metal homeostasis. The chain is ATP-binding cassette sub-family B member 6 from Mus musculus (Mouse).